The chain runs to 299 residues: ATP phosphoribosyltransferase (299 aa).

Belongs to the ATP phosphoribosyltransferase family. Long subfamily. Equilibrium between an active dimeric form, an inactive hexameric form and higher aggregates. Interconversion between the various forms is largely reversible and is influenced by the natural substrates and inhibitors of the enzyme. Requires Mg(2+) as cofactor.

The protein localises to the cytoplasm. It catalyses the reaction 1-(5-phospho-beta-D-ribosyl)-ATP + diphosphate = 5-phospho-alpha-D-ribose 1-diphosphate + ATP. The protein operates within amino-acid biosynthesis; L-histidine biosynthesis; L-histidine from 5-phospho-alpha-D-ribose 1-diphosphate: step 1/9. Its activity is regulated as follows. Feedback inhibited by histidine. Its function is as follows. Catalyzes the condensation of ATP and 5-phosphoribose 1-diphosphate to form N'-(5'-phosphoribosyl)-ATP (PR-ATP). Has a crucial role in the pathway because the rate of histidine biosynthesis seems to be controlled primarily by regulation of HisG enzymatic activity. This is ATP phosphoribosyltransferase from Edwardsiella ictaluri (strain 93-146).